Here is a 224-residue protein sequence, read N- to C-terminus: PKHD-type hydroxylase HNE_1625 (224 aa).

The region spanning 77–175 (KFAPPLISCS…RFVFVGWIQS (99 aa)) is the Fe2OG dioxygenase domain. Fe cation is bound by residues His95, Asp97, and His156. Residue Arg166 participates in 2-oxoglutarate binding.

Fe(2+) is required as a cofactor. The cofactor is L-ascorbate.

The protein is PKHD-type hydroxylase HNE_1625 of Hyphomonas neptunium (strain ATCC 15444).